The chain runs to 168 residues: Ribulose bisphosphate carboxylase small subunit, chloroplastic (168 aa).

The N-terminal 28 residues, 1 to 28, are a transit peptide targeting the chloroplast; it reads MASIAAKSVSLRAATRRAAPVAAPADAR.

It belongs to the RuBisCO small chain family. In terms of assembly, heterohexadecamer of 8 large and 8 small subunits.

The protein resides in the plastid. It localises to the chloroplast. Its function is as follows. RuBisCO catalyzes two reactions: the carboxylation of D-ribulose 1,5-bisphosphate, the primary event in carbon dioxide fixation, as well as the oxidative fragmentation of the pentose substrate. Both reactions occur simultaneously and in competition at the same active site. Although the small subunit is not catalytic it is essential for maximal activity. The protein is Ribulose bisphosphate carboxylase small subunit, chloroplastic of Chlamydomonas moewusii (Chlamydomonas eugametos).